The chain runs to 439 residues: Ornithine aminotransferase, mitochondrial (439 aa).

The transit peptide at 1-25 (MFSKLAHLQRFAVLSRGVHSSVASA) directs the protein to the mitochondrion; in hepatic form. A mitochondrion; in renal form-targeting transit peptide spans 1–35 (MFSKLAHLQRFAVLSRGVHSSVASATSVATKKTVQ). N6-acetyllysine is present on residues Lys-49 and Lys-66. Lys-102 is subject to N6-succinyllysine. An N6-acetyllysine; alternate modification is found at Lys-107. The residue at position 107 (Lys-107) is an N6-succinyllysine; alternate. Lys-292 is modified (N6-(pyridoxal phosphate)lysine). Position 362 is an N6-acetyllysine; alternate (Lys-362). An N6-succinyllysine; alternate modification is found at Lys-362. Lys-386 and Lys-392 each carry N6-acetyllysine. Lys-405 bears the N6-acetyllysine; alternate mark. Lys-405 bears the N6-succinyllysine; alternate mark. Lys-421 is subject to N6-acetyllysine.

This sequence belongs to the class-III pyridoxal-phosphate-dependent aminotransferase family. As to quaternary structure, homohexamer. Pyridoxal 5'-phosphate is required as a cofactor.

It localises to the mitochondrion matrix. It catalyses the reaction L-ornithine + 2-oxoglutarate = L-glutamate 5-semialdehyde + L-glutamate. It participates in amino-acid biosynthesis; L-proline biosynthesis; L-glutamate 5-semialdehyde from L-ornithine: step 1/1. Catalyzes the reversible interconversion of L-ornithine and 2-oxoglutarate to L-glutamate semialdehyde and L-glutamate. The polypeptide is Ornithine aminotransferase, mitochondrial (OAT) (Homo sapiens (Human)).